We begin with the raw amino-acid sequence, 87 residues long: uncharacterized protein (87 aa).

An N-terminal signal peptide occupies residues 1–26; it reads MMSTQHFILSLTILIIISNLHDEVNA. Cystine bridges form between C61/C75, C68/C79, and C74/C84.

The protein localises to the secreted. This is an uncharacterized protein from Schistosoma japonicum (Blood fluke).